The primary structure comprises 475 residues: AP-1 complex subunit mu-1-I (475 aa).

The MHD domain occupies 175-473; that stretch reads KNEAFLDIVE…TQSGDDYTIR (299 aa). The disordered stretch occupies residues 240-262; sequence ASATTSDNNTETDKKPSITSSSA.

The protein belongs to the adaptor complexes medium subunit family. Adaptor protein complex 1 (AP-1) is a heterotetramer composed of two large adaptins (gamma-type subunit APL4 and beta-type subunit APL2), a medium adaptin (mu-type subunit APM1) and a small adaptin (sigma-type subunit APS1). AP-1 interacts with clathrin.

Its subcellular location is the cytoplasmic vesicle. The protein localises to the clathrin-coated vesicle membrane. It is found in the membrane. The protein resides in the clathrin-coated pit. In terms of biological role, component of the adaptor complexes which link clathrin to receptors in coated vesicles. Clathrin-associated protein complexes are believed to interact with the cytoplasmic tails of membrane proteins, leading to their selection and concentration. The AP-1 complex interacts directly with clathrin. AP57 is probably a subunit of the Golgi membrane adaptor. This is AP-1 complex subunit mu-1-I (APM1) from Saccharomyces cerevisiae (strain ATCC 204508 / S288c) (Baker's yeast).